A 205-amino-acid chain; its full sequence is MATKVYIVYYSTYGHVERLAQEIKKGAESVGNVEVKLWQVPEILSDEVLGKMWAPPKSDVPVITPDELVEADGIIFGFPTRFGMMAAQFKAFFDSTGGLWKTQALAGKPAGIFFSTGTQGGGQETTALTAITQLTHHGMIYVPIGYTFGADMFNMEKIKGGSPYGAGTFAGADGSRQPSDIELKQAFHQGMYIAGITKKIKQTSA.

One can recognise a Flavodoxin-like domain in the interval Val-5–Tyr-192. FMN-binding positions include Ser-11 to His-15, Ile-112 to Gly-165, and His-136. NAD(+) is bound at residue Tyr-13.

It belongs to the WrbA family. FMN serves as cofactor.

It carries out the reaction a quinone + NADH + H(+) = a quinol + NAD(+). The catalysed reaction is a quinone + NADPH + H(+) = a quinol + NADP(+). Its activity is regulated as follows. Inhibited by dicumarol. Functionally, NAD(P)H:quinone oxidoreductase reducing quinones by a two-electron transfer mechanism. Can use either NADPH or NADH as electron donor. Can use menadione, 5-hydroxy-1,4-naphthoquinone (juglone) and 2,6-dimethoxy-p-benzoquinone (DMBQ) as substrates. Mitigates the toxicity of exogenous quinones in the rhizosphere. The protein is Quinone-oxidoreductase QR2 of Triphysaria versicolor (Yellow owl's clover).